Here is a 382-residue protein sequence, read N- to C-terminus: Glutamate 5-kinase (382 aa).

Lys15 is an ATP binding site. Substrate contacts are provided by Ser62, Asp149, and Asn161. 181–182 (TD) is an ATP binding site. Positions 288-366 (RGSVSVDAGA…VEIERLLGYS (79 aa)) constitute a PUA domain.

This sequence belongs to the glutamate 5-kinase family.

The protein localises to the cytoplasm. The enzyme catalyses L-glutamate + ATP = L-glutamyl 5-phosphate + ADP. Its pathway is amino-acid biosynthesis; L-proline biosynthesis; L-glutamate 5-semialdehyde from L-glutamate: step 1/2. Its function is as follows. Catalyzes the transfer of a phosphate group to glutamate to form L-glutamate 5-phosphate. The sequence is that of Glutamate 5-kinase from Delftia acidovorans (strain DSM 14801 / SPH-1).